A 145-amino-acid polypeptide reads, in one-letter code: uncharacterized protein (145 aa).

To R.meliloti R00649.

This is an uncharacterized protein from Agrobacterium fabrum (strain C58 / ATCC 33970) (Agrobacterium tumefaciens (strain C58)).